The primary structure comprises 25 residues: GVVDILKGAAKDIAGHLASKVMNKL.

L25 is subject to Leucine amide.

The protein belongs to the frog skin active peptide (FSAP) family. Ocellatin subfamily. In terms of tissue distribution, expressed by the skin glands.

It localises to the secreted. Functionally, antibacterial peptide that inhibits reference strains of both Gram-negative bacteria (E.coli, P.aeruginosa, E.cloacae, K.pneumoniae, and A.actinomycetemcomitans) and Gram-positive bacteria (S.aureus) with relatively low potencies (MIC=25-400 uM). Shows antifungal activity against C.lusitaniae (MIC=50.25 uM), but no activity against C.albicans. In the presence of an alkaloid (bufotenine), inhibits cellular infection by the rabies virus. The peptide shows very low hemolytic activity against rabbit erythrocytes. The low amphipathicity of alpha-helices demonstrated by wheel projection as well as the low cationicity may explain the low antibacterial and hemolytic potencies. The protein is Ocellatin-F1 of Leptodactylus labyrinthicus (Labyrinth frog).